The sequence spans 950 residues: Serine/threonine-protein phosphatase 4 regulatory subunit 1 (950 aa).

HEAT repeat units lie at residues 1-25 (MADL…DYSS), 26-63 (ESDV…IFNR), 65-81 (MVAR…CDDE), 82-119 (RDCI…FCQE), 127-164 (AFSK…QELI), 168-206 (DVET…MVGK), 208-246 (ITER…VVGQ), 248-285 (ATEE…ATCQ), and 287-324 (IRRT…TFAN). 3 disordered regions span residues 326-374 (SSSG…SVSN), 413-438 (ESHQ…RPEV), and 473-499 (EQNS…SPNI). Residues 332–365 (FKEESKSSEEMSVENKNRTRDQEAPEDVQVRPED) are compositionally biased toward basic and acidic residues. HEAT repeat units lie at residues 505–542 (KELE…LDAH), 568–606 (INQE…FSPD), 698–734 (LTAA…LLHI), 799–837 (WISY…RCPK), and 861–898 (QFAV…EKDY). Residue serine 935 is modified to Phosphoserine.

As to quaternary structure, serine/threonine-protein phosphatase 4 (PP4) occurs in different assemblies of the catalytic and one or more regulatory subunits. Component of the PP4 complex PPP4C-PPP4R1. Interacts with HDAC3. In terms of assembly, (Microbial infection) Interacts with merkel polyomavirus small tumor antigen; this interaction bridges small tumor antigen with NEMO to inhibit NF-kappa-B. In terms of tissue distribution, widely expressed with high expression in cultured mesangial cells. Isoform 1 and isoform 2 are expressed in renal tissues.

In terms of biological role, regulatory subunit of serine/threonine-protein phosphatase 4. May play a role in regulation of cell division in renal glomeruli. The PPP4C-PPP4R1 PP4 complex may play a role in dephosphorylation and regulation of HDAC3. Plays a role in the inhibition of TNF-induced NF-kappa-B activation by regulating the dephosphorylation of TRAF2. (Microbial infection) Participates in merkel polyomavirus-mediated inhibition of NF-kappa-B by bridging viral small tumor antigen with NEMO. This Homo sapiens (Human) protein is Serine/threonine-protein phosphatase 4 regulatory subunit 1 (PPP4R1).